Consider the following 394-residue polypeptide: ATP phosphoribosyltransferase regulatory subunit (394 aa).

It belongs to the class-II aminoacyl-tRNA synthetase family. HisZ subfamily. Heteromultimer composed of HisG and HisZ subunits.

The protein localises to the cytoplasm. The protein operates within amino-acid biosynthesis; L-histidine biosynthesis; L-histidine from 5-phospho-alpha-D-ribose 1-diphosphate: step 1/9. Required for the first step of histidine biosynthesis. May allow the feedback regulation of ATP phosphoribosyltransferase activity by histidine. This is ATP phosphoribosyltransferase regulatory subunit from Teredinibacter turnerae (strain ATCC 39867 / T7901).